The sequence spans 290 residues: Fructose-1,6-bisphosphatase class 1 (290 aa).

Residues glutamate 78, aspartate 96, leucine 98, and aspartate 99 each coordinate Mg(2+). Residues 99–102, tyrosine 201, and lysine 226 each bind substrate; that span reads DGSS. Glutamate 232 is a Mg(2+) binding site.

This sequence belongs to the FBPase class 1 family. In terms of assembly, homotetramer. The cofactor is Mg(2+).

The protein resides in the cytoplasm. It catalyses the reaction beta-D-fructose 1,6-bisphosphate + H2O = beta-D-fructose 6-phosphate + phosphate. It participates in carbohydrate biosynthesis; gluconeogenesis. The polypeptide is Fructose-1,6-bisphosphatase class 1 (Helicobacter pylori (strain J99 / ATCC 700824) (Campylobacter pylori J99)).